The following is a 615-amino-acid chain: Increased rDNA silencing protein 4 (615 aa).

Disordered stretches follow at residues S38–S135, L152–Q260, P277–S304, and K323–K445. A compositionally biased stretch (polar residues) spans V50–K65. Composition is skewed to low complexity over residues H121 to S135 and S157 to S168. The residue at position 180 (S180) is a Phosphoserine. Residues L184–S198 show a composition bias toward low complexity. Residues N248–Q260 are compositionally biased toward polar residues. The span at S281–N290 shows a compositional bias: low complexity. The segment covering E365–L377 has biased composition (basic and acidic residues). Residues D389–Q402 are compositionally biased toward acidic residues. Basic residues predominate over residues K409–D438. In terms of domain architecture, EH spans E460 to Y571.

Belongs to the IRS4 family. Interacts with INP51.

In terms of biological role, with TAX4, acts as a positive regulator of INP51 activity and phosphatidylinositol 4,5-bisphosphate turnover. Negatively regulates signaling through the cell integrity pathway, including the MAP kinase SLT2. Also seems to be involved in rDNA silencing. The protein is Increased rDNA silencing protein 4 (IRS4) of Saccharomyces cerevisiae (strain ATCC 204508 / S288c) (Baker's yeast).